We begin with the raw amino-acid sequence, 71 residues long: Bowman-Birk type trypsin inhibitor (71 aa).

Cystine bridges form between C10–C67, C11–C27, C14–C63, C17–C25, C35–C42, and C39–C55.

This sequence belongs to the Bowman-Birk serine protease inhibitor family.

In terms of biological role, inhibits trypsin but not chymotrypsin. The chain is Bowman-Birk type trypsin inhibitor from Triticum aestivum (Wheat).